The following is a 151-amino-acid chain: Ribosomal RNA large subunit methyltransferase H (151 aa).

S-adenosyl-L-methionine is bound by residues leucine 73, glycine 100, and leucine 119–leucine 124.

The protein belongs to the RNA methyltransferase RlmH family. Homodimer.

The protein localises to the cytoplasm. It carries out the reaction pseudouridine(1915) in 23S rRNA + S-adenosyl-L-methionine = N(3)-methylpseudouridine(1915) in 23S rRNA + S-adenosyl-L-homocysteine + H(+). In terms of biological role, specifically methylates the pseudouridine at position 1915 (m3Psi1915) in 23S rRNA. This chain is Ribosomal RNA large subunit methyltransferase H, found in Campylobacter hominis (strain ATCC BAA-381 / DSM 21671 / CCUG 45161 / LMG 19568 / NCTC 13146 / CH001A).